The primary structure comprises 221 residues: Casparian strip membrane protein 3 (221 aa).

Basic and acidic residues predominate over residues 1 to 12 (MDIEKAGSRREE). The interval 1 to 27 (MDIEKAGSRREEEEPIVQRPKLDKGKG) is disordered. The Cytoplasmic portion of the chain corresponds to 1–58 (MDIEKAGSRREEEEPIVQRPKLDKGKGKAHVFAPPMNYNRIMDKHKQEKMSPAGWKRG). A helical transmembrane segment spans residues 59–79 (VAIFDFVLRLIAAITAMAAAA). The Extracellular segment spans residues 80–109 (KMATTEETLPFFTQFLQFQADYTDLPTMSS). Residues 110–130 (FVIVNSIVGGYLTLSLPFSIV) form a helical membrane-spanning segment. Residues 131–148 (CILRPLAVPPRLFLILCD) lie on the Cytoplasmic side of the membrane. A helical membrane pass occupies residues 149–169 (TVMMGLTLMAASASAAIVYLA). Topologically, residues 170–194 (HNGNSSSNWLPVCQQFGDFCQGTSG) are extracellular. Asparagine 173 carries N-linked (GlcNAc...) asparagine glycosylation. The helical transmembrane segment at 195 to 215 (AVVASFIAATLLMFLVILSAF) threads the bilayer. Over 216-221 (ALKRTT) the chain is Cytoplasmic.

This sequence belongs to the Casparian strip membrane proteins (CASP) family. Homodimer and heterodimers with other CASP proteins. Interacts with CASP1, CASP2, CASP4 and CASP5.

Its subcellular location is the cell membrane. Regulates membrane-cell wall junctions and localized cell wall deposition. Required for establishment of the Casparian strip membrane domain (CSD) and the subsequent formation of Casparian strips, a cell wall modification of the root endodermis that determines an apoplastic barrier between the intraorganismal apoplasm and the extraorganismal apoplasm and prevents lateral diffusion. The polypeptide is Casparian strip membrane protein 3 (CASP3) (Arabidopsis thaliana (Mouse-ear cress)).